A 434-amino-acid chain; its full sequence is ATP-dependent protease ATPase subunit HslU (434 aa).

Residues Val-18, 60–65, Asp-247, Glu-312, and Arg-384 contribute to the ATP site; that span reads GVGKTE.

Belongs to the ClpX chaperone family. HslU subfamily. As to quaternary structure, a double ring-shaped homohexamer of HslV is capped on each side by a ring-shaped HslU homohexamer. The assembly of the HslU/HslV complex is dependent on binding of ATP.

It is found in the cytoplasm. In terms of biological role, ATPase subunit of a proteasome-like degradation complex; this subunit has chaperone activity. The binding of ATP and its subsequent hydrolysis by HslU are essential for unfolding of protein substrates subsequently hydrolyzed by HslV. HslU recognizes the N-terminal part of its protein substrates and unfolds these before they are guided to HslV for hydrolysis. In Rhodopseudomonas palustris (strain BisB18), this protein is ATP-dependent protease ATPase subunit HslU.